The following is a 166-amino-acid chain: Probable RNA-binding protein EIF1AD (166 aa).

The region spanning 5 to 89 (TKRKHVVKEV…VKAEISFVLC (85 aa)) is the S1-like domain. The Nuclear localization signal signature appears at 6–12 (KRKHVVK). Thr33 is subject to Phosphothreonine. Positions 56-65 (KYRKNIWIKR) match the Nuclear localization signal motif. The interval 114–166 (NNNRNRQTQPELPAEPQLSGEESSSEDDSDLFVNTNRRQYRESEEESEEEEAA) is disordered. Residues Ser132, Ser136, Ser137, Ser138, Ser156, and Ser160 each carry the phosphoserine modification. The segment covering 156–166 (SEEESEEEEAA) has biased composition (acidic residues).

This sequence belongs to the EIF1AD family. As to quaternary structure, interacts with GAPDH and STAT1.

It is found in the nucleus. Plays a role into cellular response to oxidative stress. Decreases cell proliferation. This Pongo abelii (Sumatran orangutan) protein is Probable RNA-binding protein EIF1AD (EIF1AD).